Reading from the N-terminus, the 405-residue chain is CMP-sialic acid transporter 5 (405 aa).

Topologically, residues 1-43 (MQRNGVVECSVCRSRLVVPSPRSVSRAYDKHRSKISSKFRALN) are cytoplasmic. A helical membrane pass occupies residues 44 to 64 (VLLVVGDCILVGLQPILVFMS). Residues 65 to 74 (KVDGKFQFSP) are Lumenal-facing. The chain crosses the membrane as a helical span at residues 75–95 (ISVNFLTEVTKVVFAIVMLII). Residues 96 to 121 (QSRKQKVGEKPLLARSTFIQAARNNA) lie on the Cytoplasmic side of the membrane. The helical transmembrane segment at 122-142 (LLAVPALLYAINNYLKFIMQL) threads the bilayer. The Lumenal segment spans residues 143–147 (YFNPS). A helical membrane pass occupies residues 148–168 (TVKMLSNLKVLVIAVLLKFIM). Residues 169 to 171 (KRR) lie on the Cytoplasmic side of the membrane. A helical transmembrane segment spans residues 172 to 192 (FSVIQWEALALLLIGISINQL). Residues 193–200 (RTVPAGNT) lie on the Lumenal side of the membrane. A helical transmembrane segment spans residues 201–221 (AFGLPVTAIAYIYTLIFVTVP). Residues 222–244 (SLASVYNEYALKSQYDTSIYLQN) lie on the Cytoplasmic side of the membrane. Residues 245–265 (LFLYGYGAIFNFLGILGTALF) form a helical membrane-spanning segment. At 266–281 (QGPESFNILRGHSRAT) the chain is on the lumenal side. A helical membrane pass occupies residues 282 to 302 (MFLICNNAAQGILSSFFFKYA). Topologically, residues 303-322 (DTILKKYSSTVATIFTGLAS) are cytoplasmic. Residues 323–343 (AAFLGHTLTINFLLGISVVFI) traverse the membrane as a helical segment. At 344-405 (SMHQFFSPLA…TDERQPLLPT (62 aa)) the chain is on the lumenal side. The segment at 368–405 (DTQNHRSSESSFVNMTAGAAEDASHRIGTDERQPLLPT) is disordered. Residues 389-405 (DASHRIGTDERQPLLPT) show a composition bias toward basic and acidic residues.

Belongs to the nucleotide-sugar transporter family. CMP-Sialate:CMP antiporter (TC 2.A.7.12) subfamily.

The protein localises to the golgi apparatus membrane. Sugar transporter involved in the transport of CMP-sialic acid from the cytoplasm into the Golgi. May transport important nucleotide sugars such as CMP-Kdo (2-keto-3-deoxy-D-manno-octulosonic acid) in physiological conditions. This Oryza sativa subsp. japonica (Rice) protein is CMP-sialic acid transporter 5.